A 66-amino-acid polypeptide reads, in one-letter code: Xenoxin-2 (66 aa).

4 disulfide bridges follow: C3–C24, C17–C37, C43–C58, and C59–C64.

In terms of tissue distribution, expressed by the skin dorsal glands.

It is found in the secreted. Functionally, lacks alpha-neurotoxic activity, has apparently no antibacterial activity, nor anti-coagulant potency. This chain is Xenoxin-2, found in Xenopus laevis (African clawed frog).